We begin with the raw amino-acid sequence, 400 residues long: Chalcone synthase C2 (400 aa).

The active site involves cysteine 168.

This sequence belongs to the thiolase-like superfamily. Chalcone/stilbene synthases family.

The enzyme catalyses (E)-4-coumaroyl-CoA + 3 malonyl-CoA + 3 H(+) = 2',4,4',6'-tetrahydroxychalcone + 3 CO2 + 4 CoA. It participates in secondary metabolite biosynthesis; flavonoid biosynthesis. The primary product of this enzyme is 4,2',4',6'-tetrahydroxychalcone (also termed naringenin-chalcone or chalcone) which can under specific conditions spontaneously isomerize into naringenin. The protein is Chalcone synthase C2 (C2) of Zea mays (Maize).